The sequence spans 543 residues: Chaperonin GroEL (543 aa).

Residues 29-32 (TLGP), 86-90 (DGTTT), Gly-413, 476-478 (NAA), and Asp-492 contribute to the ATP site.

Belongs to the chaperonin (HSP60) family. Forms a cylinder of 14 subunits composed of two heptameric rings stacked back-to-back. Interacts with the co-chaperonin GroES.

It is found in the cytoplasm. It catalyses the reaction ATP + H2O + a folded polypeptide = ADP + phosphate + an unfolded polypeptide.. Functionally, together with its co-chaperonin GroES, plays an essential role in assisting protein folding. The GroEL-GroES system forms a nano-cage that allows encapsulation of the non-native substrate proteins and provides a physical environment optimized to promote and accelerate protein folding. The protein is Chaperonin GroEL of Streptococcus pyogenes serotype M49 (strain NZ131).